A 212-amino-acid chain; its full sequence is Putative protein phosphatase 2C 53 (212 aa).

The region spanning 1–208 is the PPM-type phosphatase domain; that stretch reads MEDRFSAITN…DDISVMLIPL (208 aa). D199 lines the Mn(2+) pocket.

This sequence belongs to the PP2C family. It depends on Mg(2+) as a cofactor. Mn(2+) is required as a cofactor.

It catalyses the reaction O-phospho-L-seryl-[protein] + H2O = L-seryl-[protein] + phosphate. The catalysed reaction is O-phospho-L-threonyl-[protein] + H2O = L-threonyl-[protein] + phosphate. This chain is Putative protein phosphatase 2C 53, found in Arabidopsis thaliana (Mouse-ear cress).